The chain runs to 587 residues: Putative phagocytic receptor 1b (587 aa).

Positions 1–23 (MRLQILLIYLICIIVSSIVLVES) are cleaved as a signal peptide. 9 helical membrane-spanning segments follow: residues 223–243 (LSVM…AIMI), 294–314 (IGWQ…FGMF), 319–339 (GGNM…ISGY), 354–374 (AWNI…VVIL), 390–410 (ILTM…LTVV), 448–468 (ILIA…YIFN), 480–500 (GILC…TVAL), 524–544 (VVFI…MYGL), and 556–576 (IVCF…SLIF).

This sequence belongs to the nonaspanin (TM9SF) (TC 9.A.2) family.

It is found in the membrane. Its function is as follows. Involved in adhesion and phagocytosis of hydrophilic particles. The sequence is that of Putative phagocytic receptor 1b (phg1b) from Dictyostelium discoideum (Social amoeba).